The chain runs to 247 residues: MPNRDMLFSVPIANLGDWTFDERVADVFPDMIQRSVPGYSNIISMIGMLAERFARSNSLVYDLGCSLGAATLSMRRNIHVPDCKIIAVDNSPAMVKRCRGHIDAFRSETPVEVIEADILNIDIKNASMVVLNFTLQFLEPSQRQVLIERIYQGLNPGGVLVLSEKFNFADKDVGELLFNMHLDFKRANGYSELEISQKRSMLENVMLTDSVETHKARLADAGFEHSEIWFQCFNFGSLLAVKAEEKA.

Residues Y39, 64–66 (GCS), 89–90 (DN), 117–118 (DI), N132, and R199 each bind S-adenosyl-L-methionine.

It belongs to the class I-like SAM-binding methyltransferase superfamily. Cx-SAM synthase family. As to quaternary structure, homodimer.

The catalysed reaction is prephenate + S-adenosyl-L-methionine = carboxy-S-adenosyl-L-methionine + 3-phenylpyruvate + H2O. In terms of biological role, catalyzes the conversion of S-adenosyl-L-methionine (SAM) to carboxy-S-adenosyl-L-methionine (Cx-SAM). This Pectobacterium atrosepticum (strain SCRI 1043 / ATCC BAA-672) (Erwinia carotovora subsp. atroseptica) protein is Carboxy-S-adenosyl-L-methionine synthase.